A 258-amino-acid chain; its full sequence is Synaptosomal-associated protein 29 (258 aa).

The interval 1–41 (MSAYPKSYNPFDDDGEDEGARPAPWRDARDLPDGPDAPADR) is disordered. The span at 18–32 (EGARPAPWRDARDLP) shows a compositional bias: basic and acidic residues. Residues 76-107 (ASSEELARQRGVLERTEKMVDKMDQDLKISQK) are a coiled coil. A phosphoserine mark is found at Ser77, Ser78, and Ser114. Phosphothreonine is present on residues Thr130 and Thr137. The tract at residues 150–191 (ISTSKEQEAKYQASHPNLRKLDDTDPVPRGAGSAMSTDAYPK) is disordered. A phosphoserine mark is found at Ser163, Ser182, Ser185, Ser204, and Ser210. The t-SNARE coiled-coil homology domain maps to 196–258 (RAYHQKIDSN…KSTERKVRQL (63 aa)).

Belongs to the SNAP-25 family. Forms a SNARE complex, composed of VAMP8, SNAP29 and STX17, involved in fusion of autophagosome with lysosome. Interacts with multiple syntaxins including STX6. Interacts with EIPR1. Interacts with STX17; this interaction is increased in the absence of TMEM39A. In terms of assembly, (Microbial infection) Interacts with Hantaan hantavirus nucleoprotein; this interaction prevents the breakdown of the viral glycoprotein N by virus-triggered autophagy. As to quaternary structure, (Microbial infection) The interaction with STX17 is decreased in presence of SARS coronavirus-2/SARS-CoV-2 ORF3A protein. In terms of tissue distribution, found in brain, heart, kidney, liver, lung, placenta, skeletal muscle, spleen and pancreas.

The protein resides in the cytoplasm. It localises to the golgi apparatus membrane. The protein localises to the cytoplasmic vesicle. Its subcellular location is the autophagosome membrane. It is found in the cell projection. The protein resides in the cilium membrane. In terms of biological role, SNAREs, soluble N-ethylmaleimide-sensitive factor-attachment protein receptors, are essential proteins for fusion of cellular membranes. SNAREs localized on opposing membranes assemble to form a trans-SNARE complex, an extended, parallel four alpha-helical bundle that drives membrane fusion. SNAP29 is a SNARE involved in autophagy through the direct control of autophagosome membrane fusion with the lysososome membrane. Also plays a role in ciliogenesis by regulating membrane fusions. This is Synaptosomal-associated protein 29 from Homo sapiens (Human).